A 571-amino-acid chain; its full sequence is CDT1-like protein a, chloroplastic (571 aa).

Residues 1–79 (MSTPGSSRSI…GSRRRSEDPV (79 aa)) constitute a chloroplast transit peptide. Disordered regions lie at residues 1 to 110 (MSTP…EKEK) and 288 to 315 (TTSS…TPAK). Over residues 22–38 (SPSSKSQTGNPNPSSVA) the composition is skewed to polar residues. Residues 81-96 (SSAKSRLFFDSSSSSP) are compositionally biased toward low complexity. Residues 288-302 (TTSSLAKPTSSQINI) are compositionally biased toward polar residues. The segment covering 303 to 315 (APTPTKPTSTPAK) has biased composition (low complexity).

Belongs to the Cdt1 family. In terms of assembly, binds to ARC6. Post-translationally, phosphorylated by cyclin D- and cyclin A-containing CDKA-1, and thus targeted to proteasome-mediated proteolysis. Expressed in proliferating (e.g. shoot and root apical meristems, organ primordia) and endoreplicating cells (e.g. guard cells and stomatal lineage, developing trichomes).

The protein resides in the plastid. It is found in the chloroplast. Member of the pre-replication complex. Component of the plastid division machinery. Promotes polyloidization and regulates endoreduplication. Involved in the coordination of cell and plastid division. This is CDT1-like protein a, chloroplastic (CDT1A) from Arabidopsis thaliana (Mouse-ear cress).